The primary structure comprises 469 residues: Neuraminidase (469 aa).

The Intravirion segment spans residues 1-9 (MNPNQKIIT). The helical transmembrane segment at 10–30 (IGSVSLTIATICFLMQIAILV) threads the bilayer. The interval 11–33 (GSVSLTIATICFLMQIAILVTTV) is involved in apical transport and lipid raft association. Residues 31–469 (TTVTLHFKQY…DGADINLMPI (439 aa)) are Virion surface-facing. The interval 36-88 (HFKQYECSSPPNNQVMPCEPIIIERNITEIVYLTNTTIDKEICPKLVEYRNWS) is hypervariable stalk region. N-linked (GlcNAc...) asparagine; by host glycans are attached at residues asparagine 61, asparagine 70, and asparagine 86. The tract at residues 91-469 (QCKITGFAPF…DGADINLMPI (379 aa)) is head of neuraminidase. 8 disulfide bridges follow: cysteine 92–cysteine 417, cysteine 124–cysteine 129, cysteine 183–cysteine 230, cysteine 232–cysteine 237, cysteine 278–cysteine 291, cysteine 280–cysteine 289, cysteine 318–cysteine 337, and cysteine 421–cysteine 447. Arginine 118 contributes to the substrate binding site. An N-linked (GlcNAc...) asparagine; by host glycan is attached at asparagine 146. The active-site Proton donor/acceptor is aspartate 151. Arginine 152 lines the substrate pocket. N-linked (GlcNAc...) asparagine; by host glycosylation is found at asparagine 200 and asparagine 234. Position 276 to 277 (276 to 277 (EE)) interacts with substrate. Arginine 292 provides a ligand contact to substrate. Ca(2+) contacts are provided by aspartate 293, glycine 297, and aspartate 324. Arginine 371 serves as a coordination point for substrate. Asparagine 402 carries N-linked (GlcNAc...) asparagine; by host glycosylation. Tyrosine 406 acts as the Nucleophile in catalysis.

It belongs to the glycosyl hydrolase 34 family. As to quaternary structure, homotetramer. Requires Ca(2+) as cofactor. N-glycosylated.

It localises to the virion membrane. It is found in the host apical cell membrane. The enzyme catalyses Hydrolysis of alpha-(2-&gt;3)-, alpha-(2-&gt;6)-, alpha-(2-&gt;8)- glycosidic linkages of terminal sialic acid residues in oligosaccharides, glycoproteins, glycolipids, colominic acid and synthetic substrates.. Its activity is regulated as follows. Inhibited by the neuraminidase inhibitors zanamivir (Relenza) and oseltamivir (Tamiflu). These drugs interfere with the release of progeny virus from infected cells and are effective against all influenza strains. Resistance to neuraminidase inhibitors is quite rare. Functionally, catalyzes the removal of terminal sialic acid residues from viral and cellular glycoconjugates. Cleaves off the terminal sialic acids on the glycosylated HA during virus budding to facilitate virus release. Additionally helps virus spread through the circulation by further removing sialic acids from the cell surface. These cleavages prevent self-aggregation and ensure the efficient spread of the progeny virus from cell to cell. Otherwise, infection would be limited to one round of replication. Described as a receptor-destroying enzyme because it cleaves a terminal sialic acid from the cellular receptors. May facilitate viral invasion of the upper airways by cleaving the sialic acid moieties on the mucin of the airway epithelial cells. Likely to plays a role in the budding process through its association with lipid rafts during intracellular transport. May additionally display a raft-association independent effect on budding. Plays a role in the determination of host range restriction on replication and virulence. Sialidase activity in late endosome/lysosome traffic seems to enhance virus replication. The polypeptide is Neuraminidase (Aves (whales)).